Reading from the N-terminus, the 156-residue chain is Small ribosomal subunit protein uS7c (156 aa).

This sequence belongs to the universal ribosomal protein uS7 family. In terms of assembly, part of the 30S ribosomal subunit.

Its subcellular location is the plastid. It is found in the chloroplast. In terms of biological role, one of the primary rRNA binding proteins, it binds directly to 16S rRNA where it nucleates assembly of the head domain of the 30S subunit. The chain is Small ribosomal subunit protein uS7c (rps7) from Stangeria eriopus (Natal grass cycad).